The sequence spans 200 residues: Probable GTP-binding protein EngB (200 aa).

Positions 22-197 (NLPEYAFIGR…LDYIDSINRS (176 aa)) constitute an EngB-type G domain. GTP contacts are provided by residues 30 to 37 (GRSNVGKS), 57 to 61 (GKTLL), 75 to 78 (DLPG), 142 to 145 (TKAD), and 173 to 178 (HFVSSS). Mg(2+) is bound by residues serine 37 and threonine 59.

This sequence belongs to the TRAFAC class TrmE-Era-EngA-EngB-Septin-like GTPase superfamily. EngB GTPase family. Mg(2+) serves as cofactor.

Functionally, necessary for normal cell division and for the maintenance of normal septation. This is Probable GTP-binding protein EngB from Phocaeicola vulgatus (strain ATCC 8482 / DSM 1447 / JCM 5826 / CCUG 4940 / NBRC 14291 / NCTC 11154) (Bacteroides vulgatus).